We begin with the raw amino-acid sequence, 66 residues long: Large ribosomal subunit protein bL35 (66 aa).

It belongs to the bacterial ribosomal protein bL35 family.

The sequence is that of Large ribosomal subunit protein bL35 from Treponema pallidum (strain Nichols).